Reading from the N-terminus, the 140-residue chain is Ribosome-binding factor A (140 aa).

Positions 121–140 (KAAEHGREDEELDDTEQDDK) are disordered. The span at 129 to 140 (DEELDDTEQDDK) shows a compositional bias: acidic residues.

This sequence belongs to the RbfA family. Monomer. Binds 30S ribosomal subunits, but not 50S ribosomal subunits or 70S ribosomes.

It localises to the cytoplasm. Its function is as follows. One of several proteins that assist in the late maturation steps of the functional core of the 30S ribosomal subunit. Associates with free 30S ribosomal subunits (but not with 30S subunits that are part of 70S ribosomes or polysomes). Required for efficient processing of 16S rRNA. May interact with the 5'-terminal helix region of 16S rRNA. This is Ribosome-binding factor A from Shewanella loihica (strain ATCC BAA-1088 / PV-4).